A 473-amino-acid polypeptide reads, in one-letter code: MKTDTPTFEAQQIVRLRRGRLIRRLVQRDKTPLAILLMAAVVGTLTGLVGVAFEKAVSWVQNMRIGALVQVADHAFLLWPLAFILSALLAMVGYFLVRKFAPEAGGSGIPEIEGALEELRPVRWWRVLPVKFIGGMGTLGAGMVLGREGPTVQIGGNLGRMVLDVFRMRSAEARHTLLATGAAAGLSAAFNAPLAGILFIIEEMRPQFRYNLISIKAVFTGVIMSSIVFRIFNGEAPIIEVGKLSNAPVNTLWLYLVLGIIFGCVGPVFNTLVLRTQDMFQRFHGGEIKKWVLMGGAIGGLCGILGLIEPEAAGGGFNLIPIAAAGNFSVGLLLFIFITRVVTTLLCFSSGAPGGIFAPMLALGTLLGTAFGMAAAVLFPQYHLEAGTFAIAGMGALMAASVRAPLTGIVLVLEMTDNYQLILPMIITCLGATLLAQFLGGKPLYSTILARTLAKQDAEQAAKNQSTPAGENT.

Residues 1-32 (MKTDTPTFEAQQIVRLRRGRLIRRLVQRDKTP) are Cytoplasmic-facing. Residues 33–69 (LAILLMAAVVGTLTGLVGVAFEKAVSWVQNMRIGALV) traverse the membrane as a helical segment. Residues 70–76 (QVADHAF) are Periplasmic-facing. Residues 77-100 (LLWPLAFILSALLAMVGYFLVRKF) traverse the membrane as a helical segment. Positions 106-110 (GSGIP) match the Selectivity filter part_1 motif. S107 is a binding site for chloride. Residues 109–116 (IPEIEGAL) constitute an intramembrane region (helical). Over 117-123 (EELRPVR) the chain is Cytoplasmic. 2 consecutive transmembrane segments (helical) span residues 124 to 141 (WWRV…TLGA) and 148 to 166 (EGPT…LDVF). Residues 146 to 150 (GREGP) carry the Selectivity filter part_2 motif. At 167–176 (RMRSAEARHT) the chain is on the cytoplasmic side. Intramembrane regions (helical) lie at residues 177–189 (LLAT…LSAA) and 193–201 (PLAGILFII). Topologically, residues 202-214 (EEMRPQFRYNLIS) are cytoplasmic. Residues 215-232 (IKAVFTGVIMSSIVFRIF) traverse the membrane as a helical segment. The Periplasmic portion of the chain corresponds to 233–252 (NGEAPIIEVGKLSNAPVNTL). A helical membrane pass occupies residues 253–281 (WLYLVLGIIFGCVGPVFNTLVLRTQDMFQ). The Cytoplasmic portion of the chain corresponds to 282–287 (RFHGGE). Residues 288-309 (IKKWVLMGGAIGGLCGILGLIE) traverse the membrane as a helical segment. Topologically, residues 310–329 (PEAAGGGFNLIPIAAAGNFS) are periplasmic. The next 2 helical transmembrane spans lie at 330–349 (VGLL…LCFS) and 355–376 (GIFA…MAAA). The Selectivity filter part_3 signature appears at 355–359 (GIFAP). The chloride site is built by I356 and F357. Over 377-386 (VLFPQYHLEA) the chain is Periplasmic. The helical intramembrane region spans 387–401 (GTFAIAGMGALMAAS). The note=Loop between two helices intramembrane region spans 402–404 (VRA). An intramembrane region (helical) is located at residues 405 to 416 (PLTGIVLVLEMT). An intramembrane region (note=Loop between two helices) is located at residues 417–421 (DNYQL). The chain crosses the membrane as a helical span at residues 422–438 (ILPMIITCLGATLLAQF). Topologically, residues 439–473 (LGGKPLYSTILARTLAKQDAEQAAKNQSTPAGENT) are cytoplasmic. Residue Y445 coordinates chloride.

The protein belongs to the chloride channel (TC 2.A.49) family. ClcA subfamily. As to quaternary structure, homodimer.

Its subcellular location is the cell inner membrane. The enzyme catalyses 2 chloride(in) + H(+)(out) = 2 chloride(out) + H(+)(in). Functionally, proton-coupled chloride transporter. Functions as antiport system and exchanges two chloride ions for 1 proton. Probably acts as an electrical shunt for an outwardly-directed proton pump that is linked to amino acid decarboxylation, as part of the extreme acid resistance (XAR) response. This is H(+)/Cl(-) exchange transporter ClcA from Salmonella arizonae (strain ATCC BAA-731 / CDC346-86 / RSK2980).